The primary structure comprises 334 residues: HTH-type transcriptional repressor PurR (334 aa).

Positions 2–56 (ATIKDVARLAGVSTTTVSHVINKTRFVAETTQEKVMKAVDELNYAPSAVARSLKC) constitute an HTH lacI-type domain. The segment at residues 4–23 (IKDVARLAGVSTTTVSHVIN) is a DNA-binding region (H-T-H motif). Residues 48–56 (SAVARSLKC) mediate DNA binding. Hypoxanthine is bound by residues phenylalanine 73, lysine 189, phenylalanine 220, and aspartate 274.

As to quaternary structure, homodimer.

It participates in purine metabolism; purine nucleotide biosynthesis [regulation]. Is the main repressor of the genes involved in the de novo synthesis of purine nucleotides, regulating purB, purC, purEK, purF, purHD, purL, purMN and guaBA expression. PurR is allosterically activated to bind its cognate DNA by binding the purine corepressors, hypoxanthine or guanine, thereby effecting transcription repression. This chain is HTH-type transcriptional repressor PurR, found in Vibrio campbellii (strain ATCC BAA-1116).